The chain runs to 448 residues: RING finger protein 44 (448 aa).

The RING-type; atypical zinc finger occupies 396–437 (CVVCFSDFESRQLLRVLPCNHEFHAKCVDKWLKTNRTCPICR).

In Danio rerio (Zebrafish), this protein is RING finger protein 44 (rnf44).